We begin with the raw amino-acid sequence, 204 residues long: Transcription factor bHLH120 (204 aa).

2 disordered regions span residues 1-27 (MNPSNNPKKTRHQSHMPQERDETKKEK) and 93-116 (KREIGDPTSLTGSGSGSGSSRSEP). The bHLH domain maps to 26-78 (EKKLLHRNIERQRRQEMAILFASLRSQLPLKYIKGKRAMSDHVNGAVSFIKDT).

As to quaternary structure, homodimer.

It is found in the nucleus. This chain is Transcription factor bHLH120 (BHLH120), found in Arabidopsis thaliana (Mouse-ear cress).